Reading from the N-terminus, the 268-residue chain is Protein CONTINUOUS VASCULAR RING 1 (268 aa).

Over 1–70 the chain is Cytoplasmic; the sequence is MGDEKPVIVM…GWASKKFMTG (70 aa). Positions 21–48 are disordered; it reads IPVADSGDKDDGSSSKPSSSSSASSSSH. The segment covering 34–48 has biased composition (low complexity); sequence SSKPSSSSSASSSSH. The chain crosses the membrane as a helical span at residues 71-91; sequence CVILLPIAITFYITWWFIHFV. At 92–103 the chain is on the extracellular side; sequence DGFFSPIYAQLG. A helical transmembrane segment spans residues 104-124; sequence INVFGFGFLTSIAFIFLVGVF. At 125 to 268 the chain is on the cytoplasmic side; sequence MSSWLGASVL…LASIDRATSL (144 aa).

This sequence belongs to the plant COV1 protein family. As to expression, mostly expressed in flowers and stems, and, to a lower extent, in roots and leaves.

It is found in the membrane. Its function is as follows. Involved in the regulation of vascular patterning in the stem, probably by negatively regulating the differentiation of vascular tissue. This Arabidopsis thaliana (Mouse-ear cress) protein is Protein CONTINUOUS VASCULAR RING 1.